A 99-amino-acid chain; its full sequence is Nucleoid-associated protein SSU98_0195 (99 aa).

Belongs to the YbaB/EbfC family. In terms of assembly, homodimer.

The protein localises to the cytoplasm. The protein resides in the nucleoid. Functionally, binds to DNA and alters its conformation. May be involved in regulation of gene expression, nucleoid organization and DNA protection. This chain is Nucleoid-associated protein SSU98_0195, found in Streptococcus suis (strain 98HAH33).